We begin with the raw amino-acid sequence, 439 residues long: Probable glycine dehydrogenase (decarboxylating) subunit 1 (439 aa).

The protein belongs to the GcvP family. N-terminal subunit subfamily. In terms of assembly, the glycine cleavage system is composed of four proteins: P, T, L and H. In this organism, the P 'protein' is a heterodimer of two subunits.

The catalysed reaction is N(6)-[(R)-lipoyl]-L-lysyl-[glycine-cleavage complex H protein] + glycine + H(+) = N(6)-[(R)-S(8)-aminomethyldihydrolipoyl]-L-lysyl-[glycine-cleavage complex H protein] + CO2. Its function is as follows. The glycine cleavage system catalyzes the degradation of glycine. The P protein binds the alpha-amino group of glycine through its pyridoxal phosphate cofactor; CO(2) is released and the remaining methylamine moiety is then transferred to the lipoamide cofactor of the H protein. This is Probable glycine dehydrogenase (decarboxylating) subunit 1 from Aquifex aeolicus (strain VF5).